Here is a 208-residue protein sequence, read N- to C-terminus: Large ribosomal subunit protein uL3 (208 aa).

The interval 123–146 (RHGQSRGPMAHGSRYHRRPGSMGP) is disordered.

The protein belongs to the universal ribosomal protein uL3 family. Part of the 50S ribosomal subunit. Forms a cluster with proteins L14 and L19.

Its function is as follows. One of the primary rRNA binding proteins, it binds directly near the 3'-end of the 23S rRNA, where it nucleates assembly of the 50S subunit. This Streptococcus thermophilus (strain CNRZ 1066) protein is Large ribosomal subunit protein uL3.